A 348-amino-acid chain; its full sequence is Centromere protein N (348 aa).

It belongs to the CENP-N/CHL4 family.

The protein resides in the nucleus. It localises to the chromosome. It is found in the centromere. Functionally, probable component of a centromeric complex involved in assembly of kinetochore proteins, mitotic progression and chromosome segregation. The chain is Centromere protein N (cenpn) from Xenopus tropicalis (Western clawed frog).